A 320-amino-acid polypeptide reads, in one-letter code: tRNA U34 carboxymethyltransferase (320 aa).

Carboxy-S-adenosyl-L-methionine is bound by residues Lys-89, Trp-103, Lys-108, Gly-128, 150 to 152 (DPT), 179 to 180 (LE), Met-194, Tyr-198, and Arg-313.

The protein belongs to the class I-like SAM-binding methyltransferase superfamily. CmoB family. In terms of assembly, homotetramer.

It catalyses the reaction carboxy-S-adenosyl-L-methionine + 5-hydroxyuridine(34) in tRNA = 5-carboxymethoxyuridine(34) in tRNA + S-adenosyl-L-homocysteine + H(+). In terms of biological role, catalyzes carboxymethyl transfer from carboxy-S-adenosyl-L-methionine (Cx-SAM) to 5-hydroxyuridine (ho5U) to form 5-carboxymethoxyuridine (cmo5U) at position 34 in tRNAs. The sequence is that of tRNA U34 carboxymethyltransferase from Haemophilus ducreyi (strain 35000HP / ATCC 700724).